Here is a 144-residue protein sequence, read N- to C-terminus: Ribonuclease H (144 aa).

Residues methionine 1–leucine 136 form the RNase H type-1 domain. Mg(2+) contacts are provided by aspartate 9, glutamate 47, aspartate 69, and aspartate 128.

This sequence belongs to the RNase H family. In terms of assembly, monomer. Mg(2+) is required as a cofactor.

It is found in the cytoplasm. The enzyme catalyses Endonucleolytic cleavage to 5'-phosphomonoester.. Functionally, endonuclease that specifically degrades the RNA of RNA-DNA hybrids. This chain is Ribonuclease H, found in Campylobacter concisus (strain 13826).